Here is a 264-residue protein sequence, read N- to C-terminus: Indole-3-glycerol phosphate synthase (264 aa).

This sequence belongs to the TrpC family.

The enzyme catalyses 1-(2-carboxyphenylamino)-1-deoxy-D-ribulose 5-phosphate + H(+) = (1S,2R)-1-C-(indol-3-yl)glycerol 3-phosphate + CO2 + H2O. The protein operates within amino-acid biosynthesis; L-tryptophan biosynthesis; L-tryptophan from chorismate: step 4/5. The polypeptide is Indole-3-glycerol phosphate synthase (Xylella fastidiosa (strain M12)).